The following is a 94-amino-acid chain: Small ribosomal subunit protein uS19 (94 aa).

Belongs to the universal ribosomal protein uS19 family.

Functionally, protein S19 forms a complex with S13 that binds strongly to the 16S ribosomal RNA. This chain is Small ribosomal subunit protein uS19, found in Dictyoglomus turgidum (strain DSM 6724 / Z-1310).